The primary structure comprises 441 residues: Tol-Pal system protein TolB (441 aa).

The N-terminal stretch at 1–25 is a signal peptide; the sequence is MRIFFFAYVLPTVISLLLGCQGAIA.

It belongs to the TolB family. The Tol-Pal system is composed of five core proteins: the inner membrane proteins TolA, TolQ and TolR, the periplasmic protein TolB and the outer membrane protein Pal. They form a network linking the inner and outer membranes and the peptidoglycan layer.

It localises to the periplasm. Its function is as follows. Part of the Tol-Pal system, which plays a role in outer membrane invagination during cell division and is important for maintaining outer membrane integrity. The protein is Tol-Pal system protein TolB of Anaplasma marginale (strain St. Maries).